Here is a 432-residue protein sequence, read N- to C-terminus: Glutamate-1-semialdehyde 2,1-aminomutase (432 aa).

Lys-265 is subject to N6-(pyridoxal phosphate)lysine.

Belongs to the class-III pyridoxal-phosphate-dependent aminotransferase family. HemL subfamily. Homodimer. Pyridoxal 5'-phosphate serves as cofactor.

It localises to the cytoplasm. It catalyses the reaction (S)-4-amino-5-oxopentanoate = 5-aminolevulinate. It participates in porphyrin-containing compound metabolism; protoporphyrin-IX biosynthesis; 5-aminolevulinate from L-glutamyl-tRNA(Glu): step 2/2. This is Glutamate-1-semialdehyde 2,1-aminomutase from Histophilus somni (strain 129Pt) (Haemophilus somnus).